The sequence spans 95 residues: Glycophorin-C (95 aa).

The Extracellular segment spans residues 1–25 (MSSPVRTPPPERLEPNPGMSYAVME). A helical; Signal-anchor for type III membrane protein membrane pass occupies residues 26-46 (IAIIAAVITAVALVLVCLLFL). The Cytoplasmic portion of the chain corresponds to 47–95 (MLRYLYRHKGTYYTNEAKGTEFAESADAALQSDPALQDAGDTSKKEYFI). A phosphoserine mark is found at Ser-71, Ser-78, and Ser-89.

Belongs to the glycophorin-C family.

Its subcellular location is the cell membrane. This chain is Glycophorin-C (Gypc), found in Rattus norvegicus (Rat).